A 79-amino-acid chain; its full sequence is Large ribosomal subunit protein bL31 (79 aa).

This sequence belongs to the bacterial ribosomal protein bL31 family. Type A subfamily. As to quaternary structure, part of the 50S ribosomal subunit.

Its function is as follows. Binds the 23S rRNA. This chain is Large ribosomal subunit protein bL31, found in Trichormus variabilis (strain ATCC 29413 / PCC 7937) (Anabaena variabilis).